Here is a 290-residue protein sequence, read N- to C-terminus: 33 kDa chaperonin (290 aa).

2 disulfide bridges follow: cysteine 235/cysteine 237 and cysteine 268/cysteine 271.

This sequence belongs to the HSP33 family. Post-translationally, under oxidizing conditions two disulfide bonds are formed involving the reactive cysteines. Under reducing conditions zinc is bound to the reactive cysteines and the protein is inactive.

It localises to the cytoplasm. Its function is as follows. Redox regulated molecular chaperone. Protects both thermally unfolding and oxidatively damaged proteins from irreversible aggregation. Plays an important role in the bacterial defense system toward oxidative stress. This chain is 33 kDa chaperonin, found in Streptococcus equi subsp. zooepidemicus (strain H70).